Reading from the N-terminus, the 765-residue chain is Carboxysome assembly protein CsoS2 (765 aa).

Basic and acidic residues predominate over residues 1–22 (MSTKTSREIALERRKAMSDGGK). Disordered stretches follow at residues 1–107 (MSTK…RTDV) and 165–229 (REAQ…NKNG). Positions 1 to 215 (MSTKTSREIA…RSKTGSTSKQ (215 aa)) are N-terminal domain. One copy of the N-repeat 1 repeat lies at 7 to 22 (REIALERRKAMSDGGK). Polar residues predominate over residues 38 to 63 (SQDINSTGATSSNKKVLTSPSKSNIP). Positions 77-87 (SSKELGIERRK) are enriched in basic and acidic residues. N-repeat repeat units lie at residues 79 to 94 (KELG…THGK), 158 to 173 (RDIV…KHGK), and 196 to 211 (REIS…KTGS). Basic and acidic residues predominate over residues 187–207 (RRGDPDLSSREISQRVRELRS). A middle region region spans residues 216–586 (GNGKCRPCGP…LSNCETPPND (371 aa)). M-repeat repeat units lie at residues 240–289 (KVGK…GQFC), 300–349 (RASV…KKYC), 358–397 (KVMQ…GDQY), 411–460 (KVGS…EKFC), 470–519 (KVGL…NDNC), and 530–580 (RATV…LSNC). Disordered regions lie at residues 306–328 (TTSG…GDEP) and 367–413 (GLKV…EKVG). The interval 589–734 (YANQEKSASN…AMPPVDNKRN (146 aa)) is C-terminal domain. C-repeat repeat units follow at residues 604–648 (SVNS…GTEQ) and 677–711 (KKEP…EGVS). Disordered regions lie at residues 611–637 (EKYS…GPFD) and 656–765 (NMTY…GARG). A compositionally biased stretch (basic and acidic residues) spans 730-741 (DNKRNDETEKPD). The C-terminal peptide stretch occupies residues 735–765 (DETEKPDFLITGSSGNTRDGQLVTFSGGARG).

This sequence belongs to the CsoS2 family. As to quaternary structure, probably interacts with the carboxysome major shell protein CsoS1 via the N-terminal domain. A CsoS1-CsoS1D-CsoS2 complex can be isolated following expression in E.coli. Interacts via its N-terminal repeats with RuBisCO. Post-translationally, unlike H.neapolitanus and predictions for P.marinus strain MIT 9313, this protein is not thought to have ribosomal frameshifting.

Its subcellular location is the carboxysome. Functionally, required for alpha-carboxysome (Cb) assembly, mediates interaction between RuBisCO and the Cb shell. The protein is probably highly flexible. The C-terminal repeats act as the encapsulation signal to target proteins to the Cb; they are necessary and sufficient to target both CsoS2 and foreign proteins to the Cb. The N-terminal repeats of this protein bind simultaneously to both subunits of RuBisCO. Probably also interacts with the major shell proteins (CsoS1); that interaction would increase the local concentration of CsoS2 so that it can condense RuBisCO and full carboxysomes can be formed. There are estimated to be 163 CsoS2 proteins per carboxysome; unlike H.neapolitanus only 1 form is seen. The polypeptide is Carboxysome assembly protein CsoS2 (Prochlorococcus marinus subsp. pastoris (strain CCMP1986 / NIES-2087 / MED4)).